A 335-amino-acid polypeptide reads, in one-letter code: Ferredoxin--NADP reductase (335 aa).

FAD is bound by residues D35, Q43, Y48, A88, F122, D287, and S328.

This sequence belongs to the ferredoxin--NADP reductase type 2 family. In terms of assembly, homodimer. The cofactor is FAD.

It catalyses the reaction 2 reduced [2Fe-2S]-[ferredoxin] + NADP(+) + H(+) = 2 oxidized [2Fe-2S]-[ferredoxin] + NADPH. This is Ferredoxin--NADP reductase from Thermus thermophilus (strain ATCC BAA-163 / DSM 7039 / HB27).